Consider the following 72-residue polypeptide: Translation initiation factor IF-1 (72 aa).

One can recognise an S1-like domain in the interval 1–72 (MSKQDVIEVE…TRGRIVYRYK (72 aa)).

Belongs to the IF-1 family. As to quaternary structure, component of the 30S ribosomal translation pre-initiation complex which assembles on the 30S ribosome in the order IF-2 and IF-3, IF-1 and N-formylmethionyl-tRNA(fMet); mRNA recruitment can occur at any time during PIC assembly.

Its subcellular location is the cytoplasm. In terms of biological role, one of the essential components for the initiation of protein synthesis. Stabilizes the binding of IF-2 and IF-3 on the 30S subunit to which N-formylmethionyl-tRNA(fMet) subsequently binds. Helps modulate mRNA selection, yielding the 30S pre-initiation complex (PIC). Upon addition of the 50S ribosomal subunit IF-1, IF-2 and IF-3 are released leaving the mature 70S translation initiation complex. This Pelotomaculum thermopropionicum (strain DSM 13744 / JCM 10971 / SI) protein is Translation initiation factor IF-1.